We begin with the raw amino-acid sequence, 448 residues long: Homogentisate 1,2-dioxygenase (448 aa).

The Proton acceptor role is filled by His-303. His-346 and Glu-352 together coordinate Fe cation. Residues Tyr-361 and His-382 each contribute to the homogentisate site. His-382 is a Fe cation binding site.

Belongs to the homogentisate dioxygenase family. As to quaternary structure, hexamer; dimer of trimers. It depends on Fe cation as a cofactor.

It catalyses the reaction homogentisate + O2 = 4-maleylacetoacetate + H(+). It participates in amino-acid degradation; L-phenylalanine degradation; acetoacetate and fumarate from L-phenylalanine: step 4/6. Functionally, involved in the catabolism of homogentisate (2,5-dihydroxyphenylacetate or 2,5-OH-PhAc), a central intermediate in the degradation of phenylalanine and tyrosine. Catalyzes the oxidative ring cleavage of the aromatic ring of homogentisate to yield maleylacetoacetate. The chain is Homogentisate 1,2-dioxygenase from Rhodopseudomonas palustris (strain BisA53).